We begin with the raw amino-acid sequence, 478 residues long: Glycogen synthase (478 aa).

ADP-alpha-D-glucose is bound at residue Lys-15.

Belongs to the glycosyltransferase 1 family. Bacterial/plant glycogen synthase subfamily.

The catalysed reaction is [(1-&gt;4)-alpha-D-glucosyl](n) + ADP-alpha-D-glucose = [(1-&gt;4)-alpha-D-glucosyl](n+1) + ADP + H(+). The protein operates within glycan biosynthesis; glycogen biosynthesis. Its function is as follows. Synthesizes alpha-1,4-glucan chains using ADP-glucose. This chain is Glycogen synthase, found in Enterobacter sp. (strain 638).